A 274-amino-acid polypeptide reads, in one-letter code: Large ribosomal subunit protein uL2 (274 aa).

Disordered regions lie at residues 28 to 54 (APHA…TRHI) and 224 to 274 (VAMN…RRRK). Residues 263-274 (KRTDKMIVRRRK) show a composition bias toward basic and acidic residues.

Belongs to the universal ribosomal protein uL2 family. Part of the 50S ribosomal subunit. Forms a bridge to the 30S subunit in the 70S ribosome.

Functionally, one of the primary rRNA binding proteins. Required for association of the 30S and 50S subunits to form the 70S ribosome, for tRNA binding and peptide bond formation. It has been suggested to have peptidyltransferase activity; this is somewhat controversial. Makes several contacts with the 16S rRNA in the 70S ribosome. The polypeptide is Large ribosomal subunit protein uL2 (Pseudomonas syringae pv. tomato (strain ATCC BAA-871 / DC3000)).